Reading from the N-terminus, the 44-residue chain is Thymosin beta-4 (44 aa).

Basic and acidic residues predominate over residues 1–25 (MSDKPDMAEIEKFDKSKLKKTETQE). A disordered region spans residues 1-44 (MSDKPDMAEIEKFDKSKLKKTETQEKNPLPSKETIEQEKQAGES). At S2 the chain carries N-acetylserine. S2 bears the Phosphoserine mark. Residue K4 is modified to N6-acetyllysine. At K12 the chain carries N6-acetyllysine; alternate. A Glycyl lysine isopeptide (Lys-Gly) (interchain with G-Cter in SUMO2); alternate cross-link involves residue K12. The residue at position 23 (T23) is a Phosphothreonine. An N6-acetyllysine modification is found at K26. Residue S31 is modified to Phosphoserine. N6-acetyllysine is present on K32. Residues 33–44 (ETIEQEKQAGES) are compositionally biased toward basic and acidic residues. The residue at position 34 (T34) is a Phosphothreonine. Position 39 is an N6-acetyllysine (K39).

It belongs to the thymosin beta family. Identified in a complex composed of ACTA1, COBL, GSN AND TMSB4X. Interacts with SERPINB1. In terms of processing, acSDKP is inactivated by ACE, which removes the dipeptide Lys-Pro from its C-terminus.

The protein resides in the cytoplasm. The protein localises to the cytoskeleton. In terms of biological role, plays an important role in the organization of the cytoskeleton. Binds to and sequesters actin monomers (G actin) and therefore inhibits actin polymerization. Potent inhibitor of bone marrow derived stem cell differentiation. Acts by inhibits the entry of hematopoietic pluripotent stem cells into the S-phase. The chain is Thymosin beta-4 (TMSB4) from Bos taurus (Bovine).